The primary structure comprises 134 residues: MKPSERRKARRLAVQAIYSWQLSGNNIADVEHEFLTEQSLDGVDVAYFRELFAGVATKKTQLDELFIPHLDRPIDEVSPVEKAIVRLAAYELTFRKDVPFKVAINEAIELAKAFGADESHKFVNGLLDKLVARK.

The protein belongs to the NusB family.

Functionally, involved in transcription antitermination. Required for transcription of ribosomal RNA (rRNA) genes. Binds specifically to the boxA antiterminator sequence of the ribosomal RNA (rrn) operons. This is Transcription antitermination protein NusB from Shewanella sp. (strain MR-4).